A 312-amino-acid polypeptide reads, in one-letter code: Calcium-independent mitochondrial carrier protein SCaMC-3L (312 aa).

Solcar repeat units lie at residues 27–113, 121–206, and 217–304; these read GTLW…SKNF, QLFQ…LQCL, and PSGL…MKKT. 6 consecutive transmembrane segments (helical) span residues 33 to 50, 88 to 107, 131 to 144, 182 to 200, 219 to 243, and 279 to 298; these read LLSG…TAPL, GNGI…FSVC, SLAV…INPM, YLPN…LAVY, GLVS…LTLV, and GMTP…YLVY.

Belongs to the mitochondrial carrier (TC 2.A.29) family. In terms of tissue distribution, mainly expressed in testis and at lesser levels in brain.

Its subcellular location is the mitochondrion inner membrane. The enzyme catalyses Mg(2+)(out) + phosphate(in) + ATP(out) = Mg(2+)(in) + phosphate(out) + ATP(in). It catalyses the reaction ADP(out) + phosphate(in) + H(+)(out) = ADP(in) + phosphate(out) + H(+)(in). Calcium-independent ATP-Mg/Pi exchanger that catalyzes the electroneutral exchange of Mg-ATP or free ADP against an hydrogenphosphate and participates in the net transport of adenine nucleotides across the mitochondria inner membrane. The polypeptide is Calcium-independent mitochondrial carrier protein SCaMC-3L (Mus musculus (Mouse)).